Here is a 241-residue protein sequence, read N- to C-terminus: Demethylmenaquinone methyltransferase (241 aa).

S-adenosyl-L-methionine is bound by residues Thr60, Asp81, and 106 to 107 (DA).

The protein belongs to the class I-like SAM-binding methyltransferase superfamily. MenG/UbiE family.

It catalyses the reaction a 2-demethylmenaquinol + S-adenosyl-L-methionine = a menaquinol + S-adenosyl-L-homocysteine + H(+). It participates in quinol/quinone metabolism; menaquinone biosynthesis; menaquinol from 1,4-dihydroxy-2-naphthoate: step 2/2. Methyltransferase required for the conversion of demethylmenaquinol (DMKH2) to menaquinol (MKH2). The polypeptide is Demethylmenaquinone methyltransferase (Staphylococcus carnosus (strain TM300)).